The chain runs to 423 residues: Innexin eat-5 (423 aa).

Transmembrane regions (helical) follow at residues 25–41 (YYYS…TITA), 102–122 (PFIM…WSML), 277–297 (IFLF…FDSI), and 341–361 (HSIL…IILL).

Belongs to the pannexin family. As to quaternary structure, heterooligomer of eat-5 and another innexin. In terms of tissue distribution, expressed in pharyngeal muscles.

The protein resides in the cell membrane. It localises to the cell junction. It is found in the gap junction. In terms of biological role, structural component of the gap junctions. Required for synchronized pharyngeal muscle contractions. The polypeptide is Innexin eat-5 (eat-5) (Caenorhabditis elegans).